A 345-amino-acid polypeptide reads, in one-letter code: Telomere-binding protein cav (345 aa).

Positions 115–337 (RRKMVQPYPE…TITFQNTESE (223 aa)) are required for binding to Su(var)205. Disordered regions lie at residues 145–180 (RLDRWQKKKSQNLSAPESSPDAHASSNDAVQSHEDQ) and 200–231 (PPGVSSSDLSGIGDDEDEQQQSGFQDENINRP). 2 consecutive short sequence motifs (su(var)205-binding Pro-containing repeat) follow at residues 231–237 (PETEINE) and 298–304 (PETEMNE).

Component of the HipHop-HOAP telomere capping complex, composed of at least HipHop and cav/HOAP, and may include Su(var)205/HP1; HipHop and cav/HOAP, but not Su(var)205, are interdependent for their protein stability. Interacts with HipHop (via N-terminus). Interacts (via C-terminus) with Su(var)205/HP1 dimer (via hinge and chromoshadow domain) and Orc1; possibly interacts with other components of the origin recognition complex (ORC). Each molecule of cav/HOAP interacts with 2 molecules of Su(var)205/HP1. The HipHop-HOAP complex recruits the MTV complex, consisting of moi/modigliani, tea and ver/verrocchio, to telomeres, forming the terminin telomere-capping complex. Interacts with moi/modigliani; the interaction is direct. Interacts with ver/verrochio; the interaction is direct. Interacts with HP6, which is also part of the terminin complex. Interacts (via N-terminus) with peo/pendolino (via N-terminus); the interaction is direct.

The protein localises to the nucleus. Its subcellular location is the chromosome. The protein resides in the telomere. Functionally, part of the HipHop-HOAP complex that recruits the MTV complex to form the terminin telomere-capping complex, which binds to chromosome ends in a sequence-independent manner and prevents telomere fusion. Telomere capping is independent of the origin recognition complex (ORC). This is Telomere-binding protein cav from Drosophila melanogaster (Fruit fly).